The primary structure comprises 222 residues: Deoxyribose-phosphate aldolase (222 aa).

Asp91 acts as the Proton donor/acceptor in catalysis. The Schiff-base intermediate with acetaldehyde role is filled by Lys153. The Proton donor/acceptor role is filled by Lys182.

This sequence belongs to the DeoC/FbaB aldolase family. DeoC type 1 subfamily.

The protein localises to the cytoplasm. The catalysed reaction is 2-deoxy-D-ribose 5-phosphate = D-glyceraldehyde 3-phosphate + acetaldehyde. The protein operates within carbohydrate degradation; 2-deoxy-D-ribose 1-phosphate degradation; D-glyceraldehyde 3-phosphate and acetaldehyde from 2-deoxy-alpha-D-ribose 1-phosphate: step 2/2. Its function is as follows. Catalyzes a reversible aldol reaction between acetaldehyde and D-glyceraldehyde 3-phosphate to generate 2-deoxy-D-ribose 5-phosphate. This is Deoxyribose-phosphate aldolase from Mycoplasma capricolum subsp. capricolum (strain California kid / ATCC 27343 / NCTC 10154).